Consider the following 353-residue polypeptide: Photosystem II protein D1 (353 aa).

Thr-2 is modified (N-acetylthreonine). Phosphothreonine is present on Thr-2. 3 helical membrane passes run 29 to 46 (YIGW…TATS), 118 to 133 (HFLL…EWEL), and 142 to 156 (WIAV…AATA). Chlorophyll a is bound at residue His-118. Tyr-126 contacts pheophytin a. Asp-170 and Glu-189 together coordinate [CaMn4O5] cluster. The helical transmembrane segment at 197–218 (FHMLGVAGVFGGSLFSAMHGSL) threads the bilayer. His-198 contributes to the chlorophyll a binding site. A quinone is bound by residues His-215 and 264 to 265 (SF). His-215 is a binding site for Fe cation. His-272 is a binding site for Fe cation. A helical membrane pass occupies residues 274–288 (FLAAWPVVGIWFTAL). 4 residues coordinate [CaMn4O5] cluster: His-332, Glu-333, Asp-342, and Ala-344. Positions 345 to 353 (AVEAPSING) are excised as a propeptide.

Belongs to the reaction center PufL/M/PsbA/D family. PSII is composed of 1 copy each of membrane proteins PsbA, PsbB, PsbC, PsbD, PsbE, PsbF, PsbH, PsbI, PsbJ, PsbK, PsbL, PsbM, PsbT, PsbX, PsbY, PsbZ, Psb30/Ycf12, at least 3 peripheral proteins of the oxygen-evolving complex and a large number of cofactors. It forms dimeric complexes. It depends on The D1/D2 heterodimer binds P680, chlorophylls that are the primary electron donor of PSII, and subsequent electron acceptors. It shares a non-heme iron and each subunit binds pheophytin, quinone, additional chlorophylls, carotenoids and lipids. D1 provides most of the ligands for the Mn4-Ca-O5 cluster of the oxygen-evolving complex (OEC). There is also a Cl(-1) ion associated with D1 and D2, which is required for oxygen evolution. The PSII complex binds additional chlorophylls, carotenoids and specific lipids. as a cofactor. In terms of processing, tyr-161 forms a radical intermediate that is referred to as redox-active TyrZ, YZ or Y-Z. Post-translationally, C-terminally processed by CTPA; processing is essential to allow assembly of the oxygen-evolving complex and thus photosynthetic growth.

The protein localises to the plastid. It is found in the chloroplast thylakoid membrane. It catalyses the reaction 2 a plastoquinone + 4 hnu + 2 H2O = 2 a plastoquinol + O2. Functionally, photosystem II (PSII) is a light-driven water:plastoquinone oxidoreductase that uses light energy to abstract electrons from H(2)O, generating O(2) and a proton gradient subsequently used for ATP formation. It consists of a core antenna complex that captures photons, and an electron transfer chain that converts photonic excitation into a charge separation. The D1/D2 (PsbA/PsbD) reaction center heterodimer binds P680, the primary electron donor of PSII as well as several subsequent electron acceptors. The polypeptide is Photosystem II protein D1 (Medicago sativa (Alfalfa)).